The following is a 331-amino-acid chain: Cytosolic sulfotransferase 1 (331 aa).

74–79 serves as a coordination point for 3'-phosphoadenylyl sulfate; the sequence is KSGTTW. Residue His143 is the Proton acceptor of the active site. 3'-phosphoadenylyl sulfate contacts are provided by residues Arg165, Ser173, Tyr231, and 297–299; that span reads RKG.

This sequence belongs to the sulfotransferase 1 family.

Its subcellular location is the cytoplasm. Functionally, sulfotransferase that utilizes 3'-phospho-5'-adenylyl sulfate (PAPS) as sulfonate donor. The polypeptide is Cytosolic sulfotransferase 1 (SOT1) (Arabidopsis thaliana (Mouse-ear cress)).